The following is a 129-amino-acid chain: Cocaine- and amphetamine-regulated transcript protein (129 aa).

An N-terminal signal peptide occupies residues 1–27 (MESSRLRLLPVLGAALLLLLPLLGAGA). Tyr-41 is modified (phosphotyrosine). Ser-48 carries the phosphoserine modification. 3 cysteine pairs are disulfide-bonded: Cys-95–Cys-113, Cys-101–Cys-121, and Cys-115–Cys-128.

The protein belongs to the CART family. In terms of tissue distribution, neuroendocrine tissues. Predominantly expressed in the hypothalamus, pituitary, and longitudinal muscle-myenteric plexus. Abundant expression is also seen in the midbrain/thalamus and eye. A lower level expression is seen in the other brain regions and adrenal.

The protein resides in the secreted. In terms of biological role, satiety factor closely associated with the actions of leptin and neuropeptide y; this anorectic peptide inhibits both normal and starvation-induced feeding and completely blocks the feeding response induced by neuropeptide Y and regulated by leptin in the hypothalamus. The sequence is that of Cocaine- and amphetamine-regulated transcript protein (Cartpt) from Rattus norvegicus (Rat).